Reading from the N-terminus, the 399-residue chain is Tyrosine--tRNA ligase 2 (399 aa).

The 'HIGH' region motif lies at 43 to 52 (PTAPDLHLGH). Positions 227–231 (KMSKS) match the 'KMSKS' region motif. Residue Lys230 coordinates ATP. The S4 RNA-binding domain maps to 338–398 (ITLLDLCSVA…IGKRYKFRIG (61 aa)).

It belongs to the class-I aminoacyl-tRNA synthetase family. TyrS type 2 subfamily. Homodimer.

It is found in the cytoplasm. It carries out the reaction tRNA(Tyr) + L-tyrosine + ATP = L-tyrosyl-tRNA(Tyr) + AMP + diphosphate + H(+). Its function is as follows. Catalyzes the attachment of tyrosine to tRNA(Tyr) in a two-step reaction: tyrosine is first activated by ATP to form Tyr-AMP and then transferred to the acceptor end of tRNA(Tyr). The polypeptide is Tyrosine--tRNA ligase 2 (Photorhabdus laumondii subsp. laumondii (strain DSM 15139 / CIP 105565 / TT01) (Photorhabdus luminescens subsp. laumondii)).